A 360-amino-acid chain; its full sequence is Ribosomal RNA large subunit methyltransferase M (360 aa).

S-adenosyl-L-methionine contacts are provided by residues Ser-187, 220–223 (CPGG), Asp-239, Asp-259, and Asp-276. Lys-305 acts as the Proton acceptor in catalysis.

This sequence belongs to the class I-like SAM-binding methyltransferase superfamily. RNA methyltransferase RlmE family. RlmM subfamily. As to quaternary structure, monomer.

The protein localises to the cytoplasm. It catalyses the reaction cytidine(2498) in 23S rRNA + S-adenosyl-L-methionine = 2'-O-methylcytidine(2498) in 23S rRNA + S-adenosyl-L-homocysteine + H(+). Catalyzes the 2'-O-methylation at nucleotide C2498 in 23S rRNA. The polypeptide is Ribosomal RNA large subunit methyltransferase M (Photobacterium profundum (strain SS9)).